The sequence spans 370 residues: Protein-tyrosine sulfotransferase 1 (370 aa).

Over 1–8 (MVGKLKQN) the chain is Cytoplasmic. The chain crosses the membrane as a helical; Signal-anchor for type II membrane protein span at residues 9-25 (LLLACLVISSVTVFYLG). The Lumenal portion of the chain corresponds to 26–370 (QHAMECHHRI…KEKPQTEQVE (345 aa)). Asn60 is a glycosylation site (N-linked (GlcNAc...) asparagine). 79-83 (RSGTT) lines the 3'-phosphoadenylyl sulfate pocket. Residues Cys97 and Cys157 are joined by a disulfide bond. The active-site Proton donor/acceptor is Glu100. Residues 102–106 (RVIPR) form an interaction with peptide substrate region. The 3'-phosphoadenylyl sulfate site is built by Arg184, Ser192, and Arg196. Residues Cys226 and Cys234 are joined by a disulfide bond. A 3'-phosphoadenylyl sulfate-binding site is contributed by Tyr239. N-linked (GlcNAc...) asparagine glycosylation occurs at Asn262. Residues 286-295 (STDQVIKPVN) and Lys301 contribute to the 3'-phosphoadenylyl sulfate site.

The protein belongs to the protein sulfotransferase family. Homodimer. Can also form heterodimers with TPST2. In terms of processing, N-glycosylated. Ubiquitous. Detected in heart, brain, placenta, lung, liver, skeletal muscle, kidney and pancreas.

Its subcellular location is the golgi apparatus membrane. It carries out the reaction L-tyrosyl-[protein] + 3'-phosphoadenylyl sulfate = O-sulfo-L-tyrosine-[protein] + adenosine 3',5'-bisphosphate + H(+). Catalyzes the O-sulfation of tyrosine residues within acidic motifs of polypeptides, using 3'-phosphoadenylyl sulfate (PAPS) as cosubstrate. In Homo sapiens (Human), this protein is Protein-tyrosine sulfotransferase 1 (TPST1).